The primary structure comprises 359 residues: 3-dehydroquinate synthase (359 aa).

NAD(+) is bound by residues 71–76 (DGEQFK), 105–109 (GVIGD), 129–130 (TT), Lys-142, Lys-151, and 169–172 (CLHT). Positions 184, 247, and 264 each coordinate Zn(2+).

This sequence belongs to the sugar phosphate cyclases superfamily. Dehydroquinate synthase family. Co(2+) serves as cofactor. It depends on Zn(2+) as a cofactor. The cofactor is NAD(+).

The protein resides in the cytoplasm. It catalyses the reaction 7-phospho-2-dehydro-3-deoxy-D-arabino-heptonate = 3-dehydroquinate + phosphate. It functions in the pathway metabolic intermediate biosynthesis; chorismate biosynthesis; chorismate from D-erythrose 4-phosphate and phosphoenolpyruvate: step 2/7. Functionally, catalyzes the conversion of 3-deoxy-D-arabino-heptulosonate 7-phosphate (DAHP) to dehydroquinate (DHQ). The sequence is that of 3-dehydroquinate synthase from Shewanella putrefaciens (strain CN-32 / ATCC BAA-453).